The following is a 408-amino-acid chain: Glutamate N-acetyltransferase (408 aa).

Residues Thr150, Lys176, Thr189, Glu271, Asn403, and Thr408 each contribute to the substrate site. Residue Thr189 is the Nucleophile of the active site.

Belongs to the ArgJ family. As to quaternary structure, heterotetramer of two alpha and two beta chains.

Its subcellular location is the cytoplasm. The enzyme catalyses N(2)-acetyl-L-ornithine + L-glutamate = N-acetyl-L-glutamate + L-ornithine. It participates in amino-acid biosynthesis; L-arginine biosynthesis; L-ornithine and N-acetyl-L-glutamate from L-glutamate and N(2)-acetyl-L-ornithine (cyclic): step 1/1. Catalyzes the transfer of the acetyl group from N(2)-acetylornithine to glutamate, forming N-acetylglutamate and L-ornithine. The chain is Glutamate N-acetyltransferase from Methanococcus maripaludis (strain C5 / ATCC BAA-1333).